Reading from the N-terminus, the 400-residue chain is S-adenosylmethionine synthase (400 aa).

An ATP-binding site is contributed by histidine 17. Aspartate 19 provides a ligand contact to Mg(2+). Glutamate 45 provides a ligand contact to K(+). Residues glutamate 58 and glutamine 101 each coordinate L-methionine. The flexible loop stretch occupies residues 101–111 (QSADIAMGVDQ). Residues 177–179 (DGK), 244–245 (RF), aspartate 253, 259–260 (RK), alanine 276, and lysine 280 contribute to the ATP site. Aspartate 253 is an L-methionine binding site. Lysine 284 contributes to the L-methionine binding site.

Belongs to the AdoMet synthase family. In terms of assembly, homotetramer; dimer of dimers. Requires Mg(2+) as cofactor. K(+) serves as cofactor.

The protein resides in the cytoplasm. It carries out the reaction L-methionine + ATP + H2O = S-adenosyl-L-methionine + phosphate + diphosphate. It functions in the pathway amino-acid biosynthesis; S-adenosyl-L-methionine biosynthesis; S-adenosyl-L-methionine from L-methionine: step 1/1. Catalyzes the formation of S-adenosylmethionine (AdoMet) from methionine and ATP. The overall synthetic reaction is composed of two sequential steps, AdoMet formation and the subsequent tripolyphosphate hydrolysis which occurs prior to release of AdoMet from the enzyme. In Bacillus velezensis (strain DSM 23117 / BGSC 10A6 / LMG 26770 / FZB42) (Bacillus amyloliquefaciens subsp. plantarum), this protein is S-adenosylmethionine synthase.